Here is a 485-residue protein sequence, read N- to C-terminus: MEYKLLIGLEVHVQLGLKTKAFCGCKNDFGGIPNSRVCPICLGLPGALPSVNKELVSSAILAGHATNSTIRNIVKFDRKHYAYPDLPKGYQISQNDEPICENGFIFIKTSLGVKRINIARIHMEEDSGKSLHLLSNDNQSYIDFNRAGAPLLEIVSQPDIRSGEEAVAYLNALREIFRYLDLSECSMENGSFRCDVNINLLINENDVNYKTPISEIKNLNSFKSVKLAIDYEESKQKEEWILYRKTLESVGKCTMGFDDKKGITVLQRSKETISDYRYIKDPDLPLIKLESDYIENIKSHRMVELPFDARIRLQEQYGLSDFDVVTLTSDKNLVKYFEEAALTSSEPKKVANWILSEVLSVLNEREIGILDFNLPASYIGELVEFILNGKISGKISKEIFLEMVDRNVSSITIINEKKLEQISDKSFIESIVIEVLNENPKSIELYKKGKSHAVKFMMGQIMRKTSGKVNPVLSNEILMNKLQDV.

It belongs to the GatB/GatE family. GatB subfamily. Heterotrimer of A, B and C subunits.

The enzyme catalyses L-glutamyl-tRNA(Gln) + L-glutamine + ATP + H2O = L-glutaminyl-tRNA(Gln) + L-glutamate + ADP + phosphate + H(+). It carries out the reaction L-aspartyl-tRNA(Asn) + L-glutamine + ATP + H2O = L-asparaginyl-tRNA(Asn) + L-glutamate + ADP + phosphate + 2 H(+). Its function is as follows. Allows the formation of correctly charged Asn-tRNA(Asn) or Gln-tRNA(Gln) through the transamidation of misacylated Asp-tRNA(Asn) or Glu-tRNA(Gln) in organisms which lack either or both of asparaginyl-tRNA or glutaminyl-tRNA synthetases. The reaction takes place in the presence of glutamine and ATP through an activated phospho-Asp-tRNA(Asn) or phospho-Glu-tRNA(Gln). This chain is Aspartyl/glutamyl-tRNA(Asn/Gln) amidotransferase subunit B, found in Borrelia duttonii (strain Ly).